We begin with the raw amino-acid sequence, 159 residues long: Short coiled-coil protein (159 aa).

Residues 78-146 are a coiled coil; the sequence is MMNADMDAVD…QYIENLMSAS (69 aa).

Belongs to the SCOC family. As to quaternary structure, homodimer. Interacts with ARL1, ARL2 and ARL3. Directly interacts with FEZ1 and UVRAG. The interaction with UVRAG is reduced by amino acid starvation, but the complex is stabilized in the presence of FEZ1. Interacts with NRBF2. In terms of tissue distribution, widely expressed with highest levels in brain, heart and skeletal muscle.

It is found in the golgi apparatus membrane. Its subcellular location is the golgi apparatus. The protein localises to the trans-Golgi network. It localises to the cytoplasm. The protein resides in the cytosol. Functionally, positive regulator of amino acid starvation-induced autophagy. This is Short coiled-coil protein (SCOC) from Homo sapiens (Human).